Consider the following 301-residue polypeptide: NAD kinase (301 aa).

Asp-81 (proton acceptor) is an active-site residue. Residues Asp-81–Gly-82, Asn-155–Glu-156, His-166, Arg-183, Asp-185, Thr-196–Ser-201, and Gln-256 contribute to the NAD(+) site.

The protein belongs to the NAD kinase family. It depends on a divalent metal cation as a cofactor.

It localises to the cytoplasm. It carries out the reaction NAD(+) + ATP = ADP + NADP(+) + H(+). Functionally, involved in the regulation of the intracellular balance of NAD and NADP, and is a key enzyme in the biosynthesis of NADP. Catalyzes specifically the phosphorylation on 2'-hydroxyl of the adenosine moiety of NAD to yield NADP. The protein is NAD kinase of Mannheimia succiniciproducens (strain KCTC 0769BP / MBEL55E).